A 230-amino-acid polypeptide reads, in one-letter code: Thymidylate kinase (230 aa).

Position 20-27 (20-27 (GGEGAGKS)) interacts with ATP.

Belongs to the thymidylate kinase family.

It carries out the reaction dTMP + ATP = dTDP + ADP. Its function is as follows. Phosphorylation of dTMP to form dTDP in both de novo and salvage pathways of dTTP synthesis. In Rhodopseudomonas palustris (strain TIE-1), this protein is Thymidylate kinase.